The chain runs to 128 residues: Fluoride-specific ion channel FluC (128 aa).

4 helical membrane passes run 2 to 22 (FYSI…RWCL), 35 to 55 (LGTL…AVVF), 67 to 87 (LFVI…SVEV), and 96 to 116 (FGWA…LTAL). Positions 75 and 78 each coordinate Na(+).

The protein belongs to the fluoride channel Fluc/FEX (TC 1.A.43) family.

It localises to the cell inner membrane. The catalysed reaction is fluoride(in) = fluoride(out). Its activity is regulated as follows. Na(+) is not transported, but it plays an essential structural role and its presence is essential for fluoride channel function. In terms of biological role, fluoride-specific ion channel. Important for reducing fluoride concentration in the cell, thus reducing its toxicity. This Burkholderia cenocepacia (strain ATCC BAA-245 / DSM 16553 / LMG 16656 / NCTC 13227 / J2315 / CF5610) (Burkholderia cepacia (strain J2315)) protein is Fluoride-specific ion channel FluC.